Reading from the N-terminus, the 220-residue chain is Ribosomal RNA large subunit methyltransferase E (220 aa).

S-adenosyl-L-methionine is bound by residues Gly60, Trp62, Asp92, Asp108, and Asp133. Residue Lys173 is the Proton acceptor of the active site.

The protein belongs to the class I-like SAM-binding methyltransferase superfamily. RNA methyltransferase RlmE family.

Its subcellular location is the cytoplasm. It catalyses the reaction uridine(2552) in 23S rRNA + S-adenosyl-L-methionine = 2'-O-methyluridine(2552) in 23S rRNA + S-adenosyl-L-homocysteine + H(+). In terms of biological role, specifically methylates the uridine in position 2552 of 23S rRNA at the 2'-O position of the ribose in the fully assembled 50S ribosomal subunit. In Paraburkholderia phymatum (strain DSM 17167 / CIP 108236 / LMG 21445 / STM815) (Burkholderia phymatum), this protein is Ribosomal RNA large subunit methyltransferase E.